Consider the following 472-residue polypeptide: Argininosuccinate lyase (472 aa).

Belongs to the lyase 1 family. Argininosuccinate lyase subfamily.

Its subcellular location is the cytoplasm. The catalysed reaction is 2-(N(omega)-L-arginino)succinate = fumarate + L-arginine. It functions in the pathway amino-acid biosynthesis; L-arginine biosynthesis; L-arginine from L-ornithine and carbamoyl phosphate: step 3/3. The protein is Argininosuccinate lyase of Syntrophus aciditrophicus (strain SB).